The following is a 1059-amino-acid chain: Ubiquitin carboxyl-terminal hydrolase 36 (1059 aa).

2 disordered regions span residues 24–49 (VGNGSRAADEAKKTGGGGGDDSDSEM) and 94–148 (SNNN…KPKR). Residues 94–123 (SNNNNSSSCNGSNFGNSKVVGANGHDNGNN) show a composition bias toward low complexity. The span at 130–139 (QSESTQSGPS) shows a compositional bias: polar residues. One can recognise a USP domain in the interval 171–479 (TGMINVGNTC…NAYIMFYELD (309 aa)). The active-site Nucleophile is cysteine 180. Catalysis depends on histidine 438, which acts as the Proton acceptor. The disordered stretch occupies residues 505–673 (TVSSSSPTHT…KTPLKSSVKT (169 aa)). Phosphoserine is present on residues serine 508 and serine 510. Residues 528 to 539 (GYSNGHATGSSN) are compositionally biased toward polar residues. Composition is skewed to low complexity over residues 540-560 (AQKTAIQFKQQQQHPQQNGLQ), 592-611 (NGNKSSSSSASNSNHNKSVN), and 633-647 (ATATATATATARPTA). Residues 655 to 664 (MTEDSSDKPK) are compositionally biased toward basic and acidic residues. Phosphothreonine is present on residues threonine 673 and threonine 682. Disordered stretches follow at residues 687–893 (LVPY…EAST), 926–998 (KELV…RYHN), and 1012–1059 (KYNR…QSSS). Residues serine 692 and serine 694 each carry the phosphoserine modification. Low complexity-rich tracts occupy residues 729–739 (TKTNGGSLTNG) and 752–765 (SSSSSLASASASAA). Residue serine 766 is modified to Phosphoserine. Over residues 766-776 (SDDEDADEEEE) the composition is skewed to acidic residues. Positions 779–795 (KLTNGWQPQKQSQSLTQ) are enriched in polar residues. Residues 799-808 (PPSPKTPPSP) show a composition bias toward pro residues. A Phosphoserine modification is found at serine 801. Threonine 804 is modified (phosphothreonine). Serine 807 is modified (phosphoserine). The span at 825 to 839 (DNEDEDDDDDEDEEE) shows a compositional bias: acidic residues. 2 stretches are compositionally biased toward polar residues: residues 842–862 (QVVSTPSKNPRNPFAKSSTTP) and 876–893 (KSQQQPRVGNGYQSEAST). A phosphothreonine mark is found at threonine 846 and threonine 861. Positions 926-940 (KELVAEAREQRQHDH) are enriched in basic and acidic residues. The span at 1048-1059 (QQQQQQSQQSSS) shows a compositional bias: low complexity.

The protein belongs to the peptidase C19 family. In terms of assembly, interacts with atms/PAF1, but not with CycT.

Its subcellular location is the nucleus. The protein resides in the nucleolus. The enzyme catalyses Thiol-dependent hydrolysis of ester, thioester, amide, peptide and isopeptide bonds formed by the C-terminal Gly of ubiquitin (a 76-residue protein attached to proteins as an intracellular targeting signal).. Its function is as follows. Required for maintaining multiple types of adult stem cells, including male and female germline, epithelial follicle cell and intestinal stem cells. May function as a transcriptional repressor by continually deubiquiting histone H2B at the promoters of genes critical for cellular differentiation, thereby preventing histone H3 'Lys-4' trimethylation (H3K4). Controls selective autophagy activation by ubiquitinated proteins. The chain is Ubiquitin carboxyl-terminal hydrolase 36 (Usp36) from Drosophila pseudoobscura pseudoobscura (Fruit fly).